Reading from the N-terminus, the 433-residue chain is T-box transcription factor T (433 aa).

Residues 49–217 (LWLRFKELTN…YNPFAKAFLD (169 aa)) constitute a DNA-binding region (T-box).

In terms of assembly, monomer. Binds DNA as a monomer.

The protein resides in the nucleus. Functionally, involved in the transcriptional regulation of genes required for mesoderm formation and differentiation. Binds to a palindromic site (called T site) and activates gene transcription when bound to such a site. The polypeptide is T-box transcription factor T (Gallus gallus (Chicken)).